A 706-amino-acid polypeptide reads, in one-letter code: Choline transporter-like protein 2 (706 aa).

Over 1–33 (MGKEQQLYYGKHGTPQKYDPAFRGPIYNRGCTD) the chain is Cytoplasmic. Thr14 is modified (phosphothreonine). Residues 34 to 54 (IICCVFLFLAIVGYVAVGIIA) form a helical membrane-spanning segment. Over 55–232 (WTHGDPRKVI…RIFEDYTVSW (178 aa)) the chain is Extracellular. Residues Asn187 and Asn200 are each glycosylated (N-linked (GlcNAc...) asparagine). A helical transmembrane segment spans residues 233-253 (YWIIIGLIIAMVLSLLFIILL). At 254 to 256 (RFL) the chain is on the cytoplasmic side. The chain crosses the membrane as a helical span at residues 257-277 (AGIMVWVMIVMVILVLGYGIL). Residues 278–315 (HCYMEYARLRGEAGSDVSLVDLGFQTDFRVYLHLRQTW) are Extracellular-facing. The chain crosses the membrane as a helical span at residues 316-336 (VAFMIILSIVEVIIILLLIFL). Over 337–364 (RKRILIAIALIKEASRAVGYVMCSLLYP) the chain is Cytoplasmic. The helical transmembrane segment at 365 to 385 (LVTFFLLCLCIAYWASTAIFL) threads the bilayer. Residues 386–457 (STSNEAVYKI…FNVFMFFWLA (72 aa)) are Extracellular-facing. N-linked (GlcNAc...) asparagine glycosylation is found at Asn397 and Asn417. A helical membrane pass occupies residues 458–480 (NFVLALGQVTLAGAFASYYWAMN). The Cytoplasmic segment spans residues 481–504 (KPDDLPAFPLFSAFGRALRYHTGS). The helical transmembrane segment at 505 to 525 (LAFGSLLLAIVQVIRVILEYL) threads the bilayer. Residues 526 to 563 (DQRLKAAENKFAKFLMSCLKCCFWCLEKFIKFLNRNAY) lie on the Extracellular side of the membrane. The helical transmembrane segment at 564 to 584 (IMIAIYGTNFCTSARNAFFLL) threads the bilayer. At 585–599 (MRNIIRVAVLDKVTD) the chain is on the cytoplasmic side. The helical transmembrane segment at 600-620 (FLFLLGKLLIVGSVGILAFFF) threads the bilayer. The Extracellular segment spans residues 621 to 638 (FTHRIRIVQDTAPSLNYY). A helical membrane pass occupies residues 639–659 (WVPVVTVVIGSYLIAHGFFSV). Over 660 to 706 (YGMCVDTLFLCFLEDLERNDGTPERPYFMSLTLKKILNKTNKRQAEA) the chain is Cytoplasmic.

It belongs to the CTL (choline transporter-like) family. As to quaternary structure, interacts with COCH. N-glycosylated.

It localises to the cell membrane. Its subcellular location is the mitochondrion outer membrane. It carries out the reaction choline(out) + n H(+)(in) = choline(in) + n H(+)(out). It catalyses the reaction ethanolamine(out) + n H(+)(in) = ethanolamine(in) + n H(+)(out). Functionally, choline/H+ antiporter, mainly in mitochodria. Also acts as a low-affinity ethanolamine/H+ antiporter, regulating the supply of extracellular ethanolamine (Etn) for the CDP-Etn pathway, redistribute intracellular Etn and balance the CDP-Cho and CDP-Etn arms of the Kennedy pathway. This is Choline transporter-like protein 2 (SLC44A2) from Bos taurus (Bovine).